The primary structure comprises 281 residues: MEMO1 family protein Pars_0062 (281 aa).

The protein belongs to the MEMO1 family.

This is MEMO1 family protein Pars_0062 from Pyrobaculum arsenaticum (strain DSM 13514 / JCM 11321 / PZ6).